A 450-amino-acid polypeptide reads, in one-letter code: Probable 1,4-beta-D-glucan cellobiohydrolase C (450 aa).

The signal sequence occupies residues methionine 1–alanine 19. The CBM1 domain occupies glutamine 20–isoleucine 55. Disulfide bonds link cysteine 27–cysteine 44 and cysteine 38–cysteine 54. Residues threonine 59 to threonine 90 form a thr-rich linker region. The disordered stretch occupies residues threonine 63–valine 89. Positions alanine 91–phenylalanine 450 are catalytic. Aspartate 180 is a catalytic residue. Intrachain disulfides connect cysteine 181–cysteine 240 and cysteine 372–cysteine 419. Aspartate 226 functions as the Proton donor in the catalytic mechanism. Residue aspartate 405 is the Nucleophile of the active site. N-linked (GlcNAc...) asparagine glycosylation occurs at asparagine 409.

Belongs to the glycosyl hydrolase 6 (cellulase B) family.

It localises to the secreted. The enzyme catalyses Hydrolysis of (1-&gt;4)-beta-D-glucosidic linkages in cellulose and cellotetraose, releasing cellobiose from the non-reducing ends of the chains.. The biological conversion of cellulose to glucose generally requires three types of hydrolytic enzymes: (1) Endoglucanases which cut internal beta-1,4-glucosidic bonds; (2) Exocellobiohydrolases that cut the disaccharide cellobiose from the non-reducing end of the cellulose polymer chain; (3) Beta-1,4-glucosidases which hydrolyze the cellobiose and other short cello-oligosaccharides to glucose. In Neosartorya fischeri (strain ATCC 1020 / DSM 3700 / CBS 544.65 / FGSC A1164 / JCM 1740 / NRRL 181 / WB 181) (Aspergillus fischerianus), this protein is Probable 1,4-beta-D-glucan cellobiohydrolase C (cbhC).